The primary structure comprises 201 residues: Putative amino-acid transporter Mb0498 (201 aa).

A run of 5 helical transmembrane segments spans residues 25–45, 57–77, 104–124, 133–153, and 169–189; these read VLVI…AGVG, MTLV…LLAA, LVVT…IGAL, WFFG…LGFS, and ILDA…LVTS.

Belongs to the LysE/ArgO transporter (TC 2.A.75) family.

It is found in the cell membrane. This chain is Putative amino-acid transporter Mb0498, found in Mycobacterium bovis (strain ATCC BAA-935 / AF2122/97).